The sequence spans 436 residues: NAD(P)-dependent benzaldehyde dehydrogenase (436 aa).

Residues 117–119, 143–147, 175–178, 193–194, 215–216, Cys-249, and 337–339 contribute to the NADP(+) site; these read GPF, KPSET, RDEN, GS, EL, and ELF. Residues Glu-215 and Cys-249 contribute to the active site.

This sequence belongs to the aldehyde dehydrogenase family.

It catalyses the reaction benzaldehyde + NAD(+) + H2O = benzoate + NADH + 2 H(+). The enzyme catalyses benzaldehyde + NADP(+) + H2O = benzoate + NADPH + 2 H(+). It functions in the pathway aromatic compound metabolism; (R)-mandelate degradation; benzoate from (R)-mandelate: step 4/4. NAD or NADP-dependent benzaldehyde dehydrogenase that catalyzes the conversion of benzaldehyde into benzoate in the (R)-mandelate degradation pathway. In Pseudomonas putida (Arthrobacter siderocapsulatus), this protein is NAD(P)-dependent benzaldehyde dehydrogenase (mdlD).